The following is a 709-amino-acid chain: Catalase HPII (709 aa).

Residues 1–26 show a composition bias toward polar residues; the sequence is MSEQNNEQRSQAAGTDTVDRGNSNAK. The disordered stretch occupies residues 1–32; that stretch reads MSEQNNEQRSQAAGTDTVDRGNSNAKLEQLEA. Catalysis depends on residues His-90 and Asn-163. Tyr-377 lines the heme pocket. The disordered stretch occupies residues 419-443; the sequence is RASYEPNSIDGGWPKETPPAARNGG.

Belongs to the catalase family. HPII subfamily. It depends on heme as a cofactor.

It is found in the cytoplasm. The catalysed reaction is 2 H2O2 = O2 + 2 H2O. Decomposes hydrogen peroxide into water and oxygen; serves to protect cells from the toxic effects of hydrogen peroxide. In Pseudomonas aeruginosa (strain ATCC 15692 / DSM 22644 / CIP 104116 / JCM 14847 / LMG 12228 / 1C / PRS 101 / PAO1), this protein is Catalase HPII (katE).